Reading from the N-terminus, the 768-residue chain is Actin filament-associated protein 1-like 1 (768 aa).

The disordered stretch occupies residues 82–145 (DLRDMPEDDG…GKSPEYISSH (64 aa)). Phosphoserine occurs at positions 94, 98, 104, and 153. The disordered stretch occupies residues 173-211 (GELKSSYNDSDAMSSSYESYDEEEEEGKSPQPRHQWPSE). Residues 177-190 (SSYNDSDAMSSSYE) show a composition bias toward low complexity. A PH 1 domain is found at 220-316 (ECRICAFLLR…WLKVIREVSK (97 aa)). Serine 329 and serine 343 each carry phosphoserine. Residues 418–512 (EVPCCGYLNV…WLGLLLVEMG (95 aa)) enclose the PH 2 domain. Tyrosine 557 bears the Phosphotyrosine mark. Residues 566-604 (QDEEPERPTGAQVKRHASSCSEKSHRVDPQVKVKRHASS) form a disordered region. Basic and acidic residues predominate over residues 587 to 596 (EKSHRVDPQV). Positions 611–700 (GKNRAEEDAR…VAVKERLQQS (90 aa)) form a coiled coil. Positions 705 to 768 (PALGLSVSSK…KAKEWEMKKT (64 aa)) are disordered. Residues 710 to 729 (SVSSKPKSGETANKPQNSVP) show a composition bias toward polar residues. Serine 747 is modified (phosphoserine). The span at 759–768 (KAKEWEMKKT) shows a compositional bias: basic and acidic residues.

Interacts with CTTN. Expressed in breast, colon and brain. In all 3 tissues, expressed in the microvasculature (at protein level). In addition, in the breast, found in the contractile myoepithelial cell layer which surrounds the breast ducts (at protein level). In the colon, expressed in the mucous membrane and colonic crypts and in the smooth muscle cell layer which provide movement of the colon (at protein level). In the cerebellum, localized around the Purkinje neurons and the granule cells of the granular layer, but not inside cell bodies (at protein level). Outside of the cerebellar cortex, expressed in glial cells (at protein level). Highly expressed away from the cell bodies within the dentate nucleus (at protein level).

It is found in the cytoplasm. It localises to the cell projection. The protein resides in the podosome. The protein localises to the invadopodium. Its subcellular location is the cytoskeleton. It is found in the stress fiber. In terms of biological role, may be involved in podosome and invadosome formation. The chain is Actin filament-associated protein 1-like 1 (AFAP1L1) from Homo sapiens (Human).